Consider the following 126-residue polypeptide: MAILGLGTDIVEIARIEAVIARSGDRLARRVLSDNEWAIWKTHHQPVRFLAKRFAVKEAAAKAFGTGIRNGLAFNQFEVFNDELGKPRLRLWGEALKLAEKLGVANMHVTLADERHYACATVIIES.

Mg(2+)-binding residues include Asp9 and Glu58.

The protein belongs to the P-Pant transferase superfamily. AcpS family. It depends on Mg(2+) as a cofactor.

It is found in the cytoplasm. It carries out the reaction apo-[ACP] + CoA = holo-[ACP] + adenosine 3',5'-bisphosphate + H(+). Its function is as follows. Transfers the 4'-phosphopantetheine moiety from coenzyme A to a Ser of acyl-carrier-protein. This chain is Holo-[acyl-carrier-protein] synthase, found in Escherichia coli (strain K12 / MC4100 / BW2952).